We begin with the raw amino-acid sequence, 84 residues long: Neurotoxin BmK-M10 (84 aa).

An N-terminal signal peptide occupies residues 1 to 19 (MNYLVMISFALLLMKGVES). The 63-residue stretch at 21–83 (RDAYIAKPEN…VPIRVPGKCQ (63 aa)) folds into the LCN-type CS-alpha/beta domain. Disulfide bonds link Cys31-Cys82, Cys35-Cys55, Cys41-Cys65, and Cys45-Cys67. Position 84 (Arg84) is a propeptide, removed by a carboxypeptidase.

Expressed by the venom gland.

Its subcellular location is the secreted. Functionally, binds to voltage-dependent sodium channels (Nav) and voltage-dependent delayed rectifier potassium channels and inhibits the inactivation of the activated channels, thereby blocking neuronal transmission. Administration to mice at a dosage of 0.8 mg/kg produces an analgesic effect. The polypeptide is Neurotoxin BmK-M10 (Olivierus martensii (Manchurian scorpion)).